The sequence spans 70 residues: Large ribosomal subunit protein bL28 (70 aa).

It belongs to the bacterial ribosomal protein bL28 family.

The polypeptide is Large ribosomal subunit protein bL28 (Thermosipho melanesiensis (strain DSM 12029 / CIP 104789 / BI429)).